We begin with the raw amino-acid sequence, 121 residues long: Protein TusC (121 aa).

The protein belongs to the DsrF/TusC family. In terms of assembly, heterohexamer, formed by a dimer of trimers. The hexameric TusBCD complex contains 2 copies each of TusB, TusC and TusD. The TusBCD complex interacts with TusE.

The protein resides in the cytoplasm. Part of a sulfur-relay system required for 2-thiolation of 5-methylaminomethyl-2-thiouridine (mnm(5)s(2)U) at tRNA wobble positions. In Yersinia pestis bv. Antiqua (strain Antiqua), this protein is Protein TusC.